Consider the following 40-residue polypeptide: Protamine-1 (40 aa).

The tract at residues 1-40 is disordered; sequence MPPRRKRVSSAPRRRRRTYRRTTAHKHQDRPVHRRRRRRH.

As to expression, testis.

The protein localises to the nucleus. The protein resides in the chromosome. Its function is as follows. Protamines substitute for histones in the chromatin of sperm during the haploid phase of spermatogenesis. They compact sperm DNA into a highly condensed, stable and inactive complex. This chain is Protamine-1 (PBP1), found in Bufo japonicus (Japanese common toad).